A 97-amino-acid chain; its full sequence is HssA/B-like protein 38 (97 aa).

Residues 1–29 form a disordered region; sequence MTLFSSISSISNPMTSSKSSISSFGSGTS.

This sequence belongs to the hssA/B family.

This chain is HssA/B-like protein 38 (hssl38), found in Dictyostelium discoideum (Social amoeba).